A 451-amino-acid chain; its full sequence is TERF1-interacting nuclear factor 2 (451 aa).

The residue at position 2 (A2) is an N-acetylalanine. A disordered region spans residues 229–257 (NPLPKAKPGTHLPQGPSSRTHPEPLAGRH). Residues 256–278 (RHFNLAPLGRRRVQSQWASTRGG) carry the TBM motif. A Nuclear localization signal motif is present at residues 262-268 (PLGRRRV). The residue at position 295 (S295) is a Phosphoserine. Glycyl lysine isopeptide (Lys-Gly) (interchain with G-Cter in SUMO2) cross-links involve residues K302, K306, K341, and K353.

In terms of assembly, monomer. Found in a complex with POT1; TERF1 and TNKS1. Component of the shelterin complex (telosome) composed of TERF1, TERF2, TINF2, TERF2IP ACD and POT1. Interacts with TERF1, TERF2 and ACD. In terms of tissue distribution, detected in heart, brain, placenta, lung, liver, skeletal muscle, kidney and pancreas.

The protein resides in the nucleus. It localises to the chromosome. Its subcellular location is the telomere. It is found in the nucleus matrix. In terms of biological role, component of the shelterin complex (telosome) that is involved in the regulation of telomere length and protection. Shelterin associates with arrays of double-stranded TTAGGG repeats added by telomerase and protects chromosome ends; without its protective activity, telomeres are no longer hidden from the DNA damage surveillance and chromosome ends are inappropriately processed by DNA repair pathways. Plays a role in shelterin complex assembly. Isoform 1 may have additional role in tethering telomeres to the nuclear matrix. The chain is TERF1-interacting nuclear factor 2 (TINF2) from Homo sapiens (Human).